The following is a 1324-amino-acid chain: Tetratricopeptide repeat protein 21 homolog (1324 aa).

16 TPR repeats span residues 58–91 (PALAILKGVCLTLLGKIPDAIRHLETFVTDNDVA), 414–446 (SPLYYLIASVLAKQSKDKSFENFRQHIENLVEM), 582–615 (SLYHLIKSKTFKKRNENDEAIKTLKMALQIPRKE), 669–702 (DQLVIAQAQLYLTKGHVERALGILKKIQPGQSNF), 737–770 (PGSYSLLGDAFMKVQEPEDAINFYEQALKMQSKD), 772–804 (QLAEKIGEAYVMAHLYSKAVNFYESSMNIYKDK), 806–837 (MRLKLANLLLKLRNFEKCEKVLRAPFERDPEP), 847–880 (IQFLLLLAECHEMMDNVPEAMNDFEKAKSLHSRI), 894–927 (ARICNLQAELLYRRREFSQAVDICKQALAYHETD), 929–961 (KANLLLSKIFKEENKWTLVLQPCQTVIQVDPHN), 963–995 (EANSILADFYYIRSEAAHASTSYTTLLNTNPQH), 997–1029 (HALSRVVELFCRNGEQNAAEKHLDRAKEVNPRC), 1033–1066 (SGYNVCRGRFEWYTGDQNEALRYYSRTKDSAAGW), 1205–1238 (EKCWLMLADIYINQNKNDQAVTFLDLVFKYNCNC), 1240–1272 (KAFELYGYMREKEQKYVEAYKMYEKAFMATKER), and 1274–1307 (PGFGYKLAFTYLKAKRLFACIETCQKVLDLNPQY).

This sequence belongs to the TTC21 family. In terms of assembly, component of the IFT complex A (IFT-A) composed of at least che-11, daf-10, dyf-2, ift-139, ift-43 and ifta-1. In terms of tissue distribution, expressed in ciliated sensory neurons in the head and tail.

The protein localises to the cell projection. It localises to the cilium. The protein resides in the cytoplasm. It is found in the cytoskeleton. Its subcellular location is the cilium basal body. The protein localises to the dendrite. Functionally, component of the IFT complex A (IFT-A), a complex required for retrograde ciliary transport. In particular, may act redundantly with the intraflagellar transport protein ift-43 to regulate the transport of specific ciliary cargo proteins such as che-3 which are related to motility. Functions in cilia biogenesis. The chain is Tetratricopeptide repeat protein 21 homolog from Caenorhabditis elegans.